The chain runs to 410 residues: Multifunctional CCA protein (410 aa).

Residues Gly8 and Arg11 each contribute to the ATP site. CTP-binding residues include Gly8 and Arg11. Residues Asp21 and Asp23 each coordinate Mg(2+). ATP contacts are provided by Arg91, Arg137, and Arg140. Residues Arg91, Arg137, and Arg140 each coordinate CTP. The 102-residue stretch at Thr228 to Tyr329 folds into the HD domain.

It belongs to the tRNA nucleotidyltransferase/poly(A) polymerase family. Bacterial CCA-adding enzyme type 1 subfamily. Monomer. Can also form homodimers and oligomers. The cofactor is Mg(2+). It depends on Ni(2+) as a cofactor.

It catalyses the reaction a tRNA precursor + 2 CTP + ATP = a tRNA with a 3' CCA end + 3 diphosphate. It carries out the reaction a tRNA with a 3' CCA end + 2 CTP + ATP = a tRNA with a 3' CCACCA end + 3 diphosphate. In terms of biological role, catalyzes the addition and repair of the essential 3'-terminal CCA sequence in tRNAs without using a nucleic acid template. Adds these three nucleotides in the order of C, C, and A to the tRNA nucleotide-73, using CTP and ATP as substrates and producing inorganic pyrophosphate. tRNA 3'-terminal CCA addition is required both for tRNA processing and repair. Also involved in tRNA surveillance by mediating tandem CCA addition to generate a CCACCA at the 3' terminus of unstable tRNAs. While stable tRNAs receive only 3'-terminal CCA, unstable tRNAs are marked with CCACCA and rapidly degraded. This chain is Multifunctional CCA protein, found in Pseudomonas aeruginosa (strain LESB58).